The primary structure comprises 350 residues: tRNA dimethylallyltransferase (350 aa).

The interval 1–20 (MMNTERPAGPLRPPHPPHPP) is disordered. Positions 10–20 (PLRPPHPPHPP) are enriched in pro residues. An ATP-binding site is contributed by 27 to 34 (GPTASGKT). 29–34 (TASGKT) lines the substrate pocket. Interaction with substrate tRNA regions lie at residues 52-55 (DSAL), 176-180 (QRIAR), and 273-278 (RCVGYR).

This sequence belongs to the IPP transferase family. In terms of assembly, monomer. Requires Mg(2+) as cofactor.

The enzyme catalyses adenosine(37) in tRNA + dimethylallyl diphosphate = N(6)-dimethylallyladenosine(37) in tRNA + diphosphate. In terms of biological role, catalyzes the transfer of a dimethylallyl group onto the adenine at position 37 in tRNAs that read codons beginning with uridine, leading to the formation of N6-(dimethylallyl)adenosine (i(6)A). This is tRNA dimethylallyltransferase from Albidiferax ferrireducens (strain ATCC BAA-621 / DSM 15236 / T118) (Rhodoferax ferrireducens).